Consider the following 301-residue polypeptide: Beta carbonic anhydrase 5, chloroplastic (301 aa).

Residues 1–56 (MAATPTHFSVSHDPFSSTSLLNLQTQAIFGPNHSLKTTQLRIPASFRRKATNLQVM) constitute a chloroplast transit peptide. A Phosphothreonine modification is found at T65. S128 carries the post-translational modification Phosphoserine. C231 carries the S-nitrosocysteine modification.

It belongs to the beta-class carbonic anhydrase family. As to expression, strongly expressed in aerial tissues including leaves, stems, flowers and siliques.

The protein localises to the plastid. It localises to the chloroplast. It carries out the reaction hydrogencarbonate + H(+) = CO2 + H2O. Reversible hydration of carbon dioxide. The sequence is that of Beta carbonic anhydrase 5, chloroplastic (BCA5) from Arabidopsis thaliana (Mouse-ear cress).